Here is a 299-residue protein sequence, read N- to C-terminus: Tyrosine recombinase XerC (299 aa).

The 85-residue stretch at 1–85 (MQNELDAYFE…SVRGLYRYLN (85 aa)) folds into the Core-binding (CB) domain. The Tyr recombinase domain occupies 106-285 (RLPRLLDTDR…DFQHLAKVYD (180 aa)). Active-site residues include arginine 146, lysine 170, histidine 237, arginine 240, and histidine 263. Tyrosine 272 (O-(3'-phospho-DNA)-tyrosine intermediate) is an active-site residue.

Belongs to the 'phage' integrase family. XerC subfamily. As to quaternary structure, forms a cyclic heterotetrameric complex composed of two molecules of XerC and two molecules of XerD.

Its subcellular location is the cytoplasm. Site-specific tyrosine recombinase, which acts by catalyzing the cutting and rejoining of the recombining DNA molecules. The XerC-XerD complex is essential to convert dimers of the bacterial chromosome into monomers to permit their segregation at cell division. It also contributes to the segregational stability of plasmids. This Stutzerimonas stutzeri (strain A1501) (Pseudomonas stutzeri) protein is Tyrosine recombinase XerC.